Here is a 548-residue protein sequence, read N- to C-terminus: Chaperonin GroEL (548 aa).

ATP contacts are provided by residues 30-33 (TLGP), lysine 51, 87-91 (DGTTT), glycine 415, and aspartate 496. A disordered region spans residues 527–548 (SDKEDAMPPMRGGMGGMGGMDF). The segment covering 538 to 548 (GGMGGMGGMDF) has biased composition (gly residues).

The protein belongs to the chaperonin (HSP60) family. Forms a cylinder of 14 subunits composed of two heptameric rings stacked back-to-back. Interacts with the co-chaperonin GroES.

It is found in the cytoplasm. It carries out the reaction ATP + H2O + a folded polypeptide = ADP + phosphate + an unfolded polypeptide.. Its function is as follows. Together with its co-chaperonin GroES, plays an essential role in assisting protein folding. The GroEL-GroES system forms a nano-cage that allows encapsulation of the non-native substrate proteins and provides a physical environment optimized to promote and accelerate protein folding. The polypeptide is Chaperonin GroEL (Rickettsia akari (strain Hartford)).